A 395-amino-acid polypeptide reads, in one-letter code: Immunoglobulin heavy constant gamma 2 (395 aa).

Residues 1–98 (ASTKGPSVFP…PSNTKVDKTV (98 aa)) are CH1. Topologically, residues 1–346 (ASTKGPSVFP…DGELDGLWTT (346 aa)) are extracellular. 3 consecutive Ig-like domains span residues 6 to 99 (PSVF…KTVE), 117 to 216 (PSVF…KTIS), and 225 to 321 (PQVY…KSLS). Cys-27 and Cys-83 are joined by a disulfide. Residues 99–110 (ERKCCVECPPCP) form a hinge region. The CH2 stretch occupies residues 111 to 219 (APPVAGPSVF…PIEKTISKTK (109 aa)). 2 disulfide bridges follow: Cys-140–Cys-200 and Cys-246–Cys-304. Asn-176 carries an N-linked (GlcNAc...) (complex) asparagine glycan. The tract at residues 220–326 (GQPREPQVYT…QKSLSLSPEL (107 aa)) is CH3. Residues 347 to 367 (ITIFITLFLLSVCYSATITFF) traverse the membrane as a helical segment. Residues 368-395 (KVKWIFSSVVDLKQTIVPDYRNMIRQGA) lie on the Cytoplasmic side of the membrane.

Immunoglobulins are composed of two identical heavy chains and two identical light chains; disulfide-linked. Post-translationally, glycosylation on Asn-176 is required for interaction with Fc receptors and ability to activate the complement pathway. (Microbial infection) Deglycosylation on Asn-176 by S.pyogenes EndoS or Endos2 endoglucosidases prevents interaction between immunoglobulin-gamma (IgG) and Fc receptors, impairing ability to activate the complement pathway.

The protein localises to the secreted. Its subcellular location is the cell membrane. In terms of biological role, constant region of immunoglobulin heavy chains. Immunoglobulins, also known as antibodies, are membrane-bound or secreted glycoproteins produced by B lymphocytes. In the recognition phase of humoral immunity, the membrane-bound immunoglobulins serve as receptors which, upon binding of a specific antigen, trigger the clonal expansion and differentiation of B lymphocytes into immunoglobulins-secreting plasma cells. Secreted immunoglobulins mediate the effector phase of humoral immunity, which results in the elimination of bound antigens. The antigen binding site is formed by the variable domain of one heavy chain, together with that of its associated light chain. Thus, each immunoglobulin has two antigen binding sites with remarkable affinity for a particular antigen. The variable domains are assembled by a process called V-(D)-J rearrangement and can then be subjected to somatic hypermutations which, after exposure to antigen and selection, allow affinity maturation for a particular antigen. This is Immunoglobulin heavy constant gamma 2 from Homo sapiens (Human).